A 530-amino-acid polypeptide reads, in one-letter code: Autoinducer-2 kinase (530 aa).

It belongs to the FGGY kinase family.

The protein resides in the cytoplasm. It catalyses the reaction (S)-4,5-dihydroxypentane-2,3-dione + ATP = (2S)-2-hydroxy-3,4-dioxopentyl phosphate + ADP + H(+). Its function is as follows. Catalyzes the phosphorylation of autoinducer-2 (AI-2) to phospho-AI-2, which subsequently inactivates the transcriptional regulator LsrR and leads to the transcription of the lsr operon. Phosphorylates the ring-open form of (S)-4,5-dihydroxypentane-2,3-dione (DPD), which is the precursor to all AI-2 signaling molecules, at the C5 position. The polypeptide is Autoinducer-2 kinase (Yersinia pestis bv. Antiqua (strain Angola)).